The primary structure comprises 868 residues: Aconitate hydratase B (868 aa).

Substrate is bound by residues arginine 192, 235–237 (SSR), 404–406 (QDT), and serine 488. [4Fe-4S] cluster contacts are provided by cysteine 700, cysteine 758, and cysteine 761. Residues arginine 780 and arginine 785 each coordinate substrate.

Belongs to the aconitase/IPM isomerase family. As to quaternary structure, monomer. The cofactor is [4Fe-4S] cluster.

It carries out the reaction citrate = D-threo-isocitrate. It catalyses the reaction (2S,3R)-3-hydroxybutane-1,2,3-tricarboxylate = 2-methyl-cis-aconitate + H2O. It participates in carbohydrate metabolism; tricarboxylic acid cycle; isocitrate from oxaloacetate: step 2/2. The protein operates within organic acid metabolism; propanoate degradation. Its function is as follows. Involved in the catabolism of short chain fatty acids (SCFA) via the tricarboxylic acid (TCA)(acetyl degradation route) and probably via the 2-methylcitrate cycle I (propionate degradation route). Catalyzes the reversible isomerization of citrate to isocitrate via cis-aconitate. Catalyzes the hydration of 2-methyl-cis-aconitate to yield (2R,3S)-2-methylisocitrate. The apo form of AcnB functions as a RNA-binding regulatory protein. The chain is Aconitate hydratase B (acnB) from Synechocystis sp. (strain ATCC 27184 / PCC 6803 / Kazusa).